Here is a 530-residue protein sequence, read N- to C-terminus: Ubiquitin carboxyl-terminal hydrolase 17-like protein 10 (530 aa).

One can recognise a USP domain in the interval 80 to 375; the sequence is AGLQNMGNTC…QAYVLFYIQK (296 aa). Residue Cys89 is the Nucleophile of the active site. Catalysis depends on His334, which acts as the Proton acceptor. Basic and acidic residues-rich tracts occupy residues 382-392 and 398-410; these read SESVSRGREPR and DTDR…ELKR. 2 disordered regions span residues 382–410 and 477–530; these read SESV…ELKR and NHHP…LVCQ. Residues 484–495 show a composition bias toward low complexity; the sequence is SSLLNLSSTTPT. Positions 496–505 are enriched in polar residues; sequence DQESMNTGTL. The span at 510 to 524 shows a compositional bias: basic residues; the sequence is GRTRRSKGKNKHSKR.

The protein belongs to the peptidase C19 family. USP17 subfamily.

It localises to the nucleus. Its subcellular location is the endoplasmic reticulum. The catalysed reaction is Thiol-dependent hydrolysis of ester, thioester, amide, peptide and isopeptide bonds formed by the C-terminal Gly of ubiquitin (a 76-residue protein attached to proteins as an intracellular targeting signal).. In terms of biological role, deubiquitinating enzyme that removes conjugated ubiquitin from specific proteins to regulate different cellular processes that may include cell proliferation, progression through the cell cycle, apoptosis, cell migration, and the cellular response to viral infection. In Homo sapiens (Human), this protein is Ubiquitin carboxyl-terminal hydrolase 17-like protein 10 (USP17L10).